Reading from the N-terminus, the 136-residue chain is MLQPKRMKFRKMFKGRNRGLANGTEVSFGTFGLKAVGRGRLTARQIESARRAMTRHIKRQGQIWIRVFPDKPITSKPLEVRMGKGKGNVEYWVCQIQPGKVLYEMNGVSEVIAREAFALAAAKLPIKTTFVTKTVM.

It belongs to the universal ribosomal protein uL16 family. As to quaternary structure, part of the 50S ribosomal subunit.

Functionally, binds 23S rRNA and is also seen to make contacts with the A and possibly P site tRNAs. The sequence is that of Large ribosomal subunit protein uL16 from Shewanella baltica (strain OS155 / ATCC BAA-1091).